We begin with the raw amino-acid sequence, 259 residues long: Pycsar effector protein RsmPycTIR (259 aa).

A nucleoside 3',5'-cyclic phosphate is bound at residue 1-120 (MVGGDEVIAN…RRVHEDFSGR (120 aa)). Positions 126–229 (LATGISRRTS…AEFQYQISSS (104 aa)) are TIR-like. Helical transmembrane passes span 136 to 156 (GWNW…AIWY), 169 to 189 (VLLP…ADPV), and 234 to 254 (QATA…LFWI).

It is found in the cell inner membrane. It carries out the reaction NAD(+) + H2O = ADP-D-ribose + nicotinamide + H(+). Pycsar (pyrimidine cyclase system for antiphage resistance) provides immunity against bacteriophage. The pyrimidine cyclase (PycC) synthesizes cyclic nucleotides in response to infection; these serve as specific second messenger signals. The signals activate the adjacent effector, leading to bacterial cell death and abortive phage infection. A clade B Pycsar system. Its function is as follows. The effector gene of a two-gene Pycsar system. Expression of this and adjacent uridylate cyclase RsmPycC (AC A0A1V0HUX5) probably confers resistance to bacteriophage. The genes are probably only expressed in response to bacteriophage infection. Probably only responds to cUMP (produced by its cognate NTP cyclase), it may act by degrading NAD(+) and/or by impairing membrane integrity. The protein is Pycsar effector protein RsmPycTIR of Rhodovulum sp. (strain MB263).